A 579-amino-acid polypeptide reads, in one-letter code: 2-isopropylmalate synthase (579 aa).

The 275-residue stretch at 40-314 (PRWCAVDLRD…DPMIDFSDID (275 aa)) folds into the Pyruvate carboxyltransferase domain. Asp49, His253, His255, and Asn289 together coordinate Mg(2+). Residues 456-579 (SGKADGQWGR…VNRAIRDAQS (124 aa)) are regulatory domain.

Belongs to the alpha-IPM synthase/homocitrate synthase family. LeuA type 2 subfamily. In terms of assembly, homodimer. Requires Mg(2+) as cofactor.

The protein localises to the cytoplasm. The enzyme catalyses 3-methyl-2-oxobutanoate + acetyl-CoA + H2O = (2S)-2-isopropylmalate + CoA + H(+). It functions in the pathway amino-acid biosynthesis; L-leucine biosynthesis; L-leucine from 3-methyl-2-oxobutanoate: step 1/4. Catalyzes the condensation of the acetyl group of acetyl-CoA with 3-methyl-2-oxobutanoate (2-ketoisovalerate) to form 3-carboxy-3-hydroxy-4-methylpentanoate (2-isopropylmalate). The protein is 2-isopropylmalate synthase of Pseudarthrobacter chlorophenolicus (strain ATCC 700700 / DSM 12829 / CIP 107037 / JCM 12360 / KCTC 9906 / NCIMB 13794 / A6) (Arthrobacter chlorophenolicus).